Reading from the N-terminus, the 251-residue chain is 5'-nucleotidase SurE 1 (251 aa).

Residues Asp8, Asp9, Ser39, and Asn95 each contribute to the a divalent metal cation site.

This sequence belongs to the SurE nucleotidase family. A divalent metal cation is required as a cofactor.

The protein resides in the cytoplasm. The catalysed reaction is a ribonucleoside 5'-phosphate + H2O = a ribonucleoside + phosphate. Its function is as follows. Nucleotidase that shows phosphatase activity on nucleoside 5'-monophosphates. This Thermus thermophilus (strain ATCC BAA-163 / DSM 7039 / HB27) protein is 5'-nucleotidase SurE 1.